The chain runs to 329 residues: Putative L-ascorbate peroxidase 6 (329 aa).

Catalysis depends on histidine 123, which acts as the Proton acceptor. Residue histidine 244 participates in heme b binding.

This sequence belongs to the peroxidase family. Ascorbate peroxidase subfamily. Requires heme b as cofactor.

The enzyme catalyses L-ascorbate + H2O2 = L-dehydroascorbate + 2 H2O. Functionally, plays a key role in hydrogen peroxide removal. This chain is Putative L-ascorbate peroxidase 6 (APX6), found in Arabidopsis thaliana (Mouse-ear cress).